The sequence spans 149 residues: Transcription factor Atoh7 (149 aa).

One can recognise a bHLH domain in the interval 41–93; the sequence is RRRLAANARERRRMQGLNTAFDRLRRVVPQWGQDKKLSKYETLQMALSYIIAL.

Forms a heterodimer with TCF3 isoform E47; interaction may be required for DNA-binding in certain situations. In terms of tissue distribution, expressed in retinal ganglion cells. Expressed in the cerebellum, trapezoid body, ventral nucleus of the lateral lamniscus and in areas of the auditory hindbrain such as the cochlear nucleus, lateral superior olive and medial nucleus of the trapezoid body. Expressed in the modiolar nerve root and in the cochlear in a small group of bushy neurons within the acoustic nerve. Expressed weakly in the sensory epithelia of the saccule and utricle.

The protein resides in the nucleus. It localises to the perikaryon. It is found in the cell projection. Its subcellular location is the axon. Transcription factor that binds to DNA at the consensus sequence 5'-CAG[GC]TG-3'. Dimerization with TCF3 isoform E47 may be required in certain situations. Binds to gene promoters and enhancer elements, and thereby regulates a transcriptional program of retinal ganglion cell (RGC) determinant genes. Although the exact mechanism is not certain, retinal transcription regulation by ATOH7 has a role in RGC determination and survival, photoreceptor population development, targeting of RGC axons to the optic nerve and development of the retino-hypothalamic tract. Binds to its own promoter and enhancer sequences, suggesting autoregulation of ATOH7 transcription. Required for retinal circadian rhythm photoentrainment. Plays a role in brainstem auditory signaling and binaural processing. In Mus musculus (Mouse), this protein is Transcription factor Atoh7.